Here is a 92-residue protein sequence, read N- to C-terminus: MIIDSQSVVQYTFKIDILEKLYKFLPNLYHSIVNELVEELHLENNDFLIGTYKDLSKAGYFYVIPAPGKNIDDVLKTIMIYVHDYEIEDYFE.

Pays a role in the inhibition of the host restriction-modification system. Strongly inhibits the host mcrA endonuclease that cleaves 5-methyl and 5-hydroxymethylcytosines at the specific DNA sequence C(me)CGG. This Enterobacteria phage T4 (Bacteriophage T4) protein is Anti-restriction endonuclease (arn).